The primary structure comprises 944 residues: E3 ubiquitin-protein ligase HACE1 (944 aa).

ANK repeat units lie at residues 23 to 55 (LPED…NSKF), 64 to 93 (VKRS…DPNY), 97 to 126 (SGCT…DVNI), 130 to 159 (EGLT…NVDV), 163 to 192 (MGQT…DINR), 196 to 226 (SGAT…YLPD), and 228 to 253 (NGVT…QHHP). Residues 609 to 944 (NCEKLKQGIA…HCGSYGYTMA (336 aa)) enclose the HECT domain. Cys911 acts as the Glycyl thioester intermediate in catalysis.

It is found in the golgi apparatus. It localises to the golgi stack membrane. The protein localises to the cytoplasm. Its subcellular location is the endoplasmic reticulum. The enzyme catalyses S-ubiquitinyl-[E2 ubiquitin-conjugating enzyme]-L-cysteine + [acceptor protein]-L-lysine = [E2 ubiquitin-conjugating enzyme]-L-cysteine + N(6)-ubiquitinyl-[acceptor protein]-L-lysine.. The protein operates within protein modification; protein ubiquitination. E3 ubiquitin-protein ligase involved in Golgi membrane fusion and regulation of small GTPases. Acts as a regulator of Golgi membrane dynamics during the cell cycle: recruited to Golgi membrane by Rab proteins and regulates postmitotic Golgi membrane fusion. Acts by mediating ubiquitination during mitotic Golgi disassembly, ubiquitination serving as a signal for Golgi reassembly later, after cell division. This is E3 ubiquitin-protein ligase HACE1 (hace1) from Xenopus laevis (African clawed frog).